Reading from the N-terminus, the 337-residue chain is GTP 3',8-cyclase (337 aa).

The Radical SAM core domain maps to 17-242; it reads AFQRRYYYLR…QSKGLLDGPA (226 aa). Arg26 is a binding site for GTP. [4Fe-4S] cluster-binding residues include Cys33 and Cys37. S-adenosyl-L-methionine is bound at residue Tyr39. Cys40 is a [4Fe-4S] cluster binding site. Arg76 lines the GTP pocket. Residue Gly80 coordinates S-adenosyl-L-methionine. Thr107 is a GTP binding site. Ser131 is an S-adenosyl-L-methionine binding site. Lys168 is a binding site for GTP. Met202 contributes to the S-adenosyl-L-methionine binding site. [4Fe-4S] cluster contacts are provided by Cys265 and Cys268. 270–272 contributes to the GTP binding site; that stretch reads RLR. Cys282 contributes to the [4Fe-4S] cluster binding site.

It belongs to the radical SAM superfamily. MoaA family. Monomer and homodimer. The cofactor is [4Fe-4S] cluster.

It catalyses the reaction GTP + AH2 + S-adenosyl-L-methionine = (8S)-3',8-cyclo-7,8-dihydroguanosine 5'-triphosphate + 5'-deoxyadenosine + L-methionine + A + H(+). Its pathway is cofactor biosynthesis; molybdopterin biosynthesis. Catalyzes the cyclization of GTP to (8S)-3',8-cyclo-7,8-dihydroguanosine 5'-triphosphate. This chain is GTP 3',8-cyclase, found in Pasteurella multocida (strain Pm70).